A 226-amino-acid polypeptide reads, in one-letter code: MDILIISLKSLGYSRTARPLDSSPLVVHAVAGAGKSTALRKLLARHSTFTVHTLGVPDKISIRTRGIQKPGPIPEGNFAILDEYTLDATTREAYQALFADPYQAPELSLEPHFYLETSFRTPTKAAALIASCGFDFETNSQEEGHLEITGIFKGPLLGKVIAIDSEAETTLSRHGVEFVKPCQVTGLEFPVVTIVSAAPIEEIGQSTLFYNAITRSKGLTYVRAGA.

The (+)RNA virus helicase ATP-binding domain occupies 1–138 (MDILIISLKS…IASCGFDFET (138 aa)). The (+)RNA virus helicase C-terminal domain maps to 139-226 (NSQEEGHLEI…KGLTYVRAGA (88 aa)).

It belongs to the Tymovirales TGBp1 protein family. As to quaternary structure, homodimer and homooligomer. Interacts with capsid protein. Interacts with host AGO1; this interaction targets the host protein for degradation, thereby suppressing the antiviral RNA silencing.

The protein resides in the host cytoplasm. Functionally, transports viral genome to neighboring plant cells directly through plasmosdesmata, without any budding. The movement protein allows efficient cell to cell propagation, by bypassing the host cell wall barrier. Increases plasmodesma size exclusion limit. Acts as a suppressor of RNA-mediated gene silencing, also known as post-transcriptional gene silencing (PTGS), a mechanism of plant viral defense that limits the accumulation of viral RNAs. This chain is Movement and silencing protein TGBp1, found in Brassica campestris (Field mustard).